The sequence spans 97 residues: YcgL domain-containing protein PA1295 (97 aa).

In terms of domain architecture, YcgL spans 3-87; it reads RICSVYKSPR…GEEEYIEHLP (85 aa).

This chain is YcgL domain-containing protein PA1295, found in Pseudomonas aeruginosa (strain ATCC 15692 / DSM 22644 / CIP 104116 / JCM 14847 / LMG 12228 / 1C / PRS 101 / PAO1).